The following is a 354-amino-acid chain: MKSLLLLVLISVCWADHLSNNYTLDHDRVIHIQAENGPRLLVEAEQAKVFSHRGGNVTLPCKFFRDPTAFGSGTHKIRIKWTKLTSDYLKEVDVFVSMGYHKKTYGGYHGRVFLKGGSDNDASLVITDLTLEDYGRYKCEVIEGLEDDTAVVALDLEGVVFPYFPRLGRYNLNFHEAQQACLDQDAVIASFDQLYDAWRGGLDWCNAGWLSDGSVQYPITKPREPCGGQNTVPGVRNYGFWDKDKSRYDVFCFTSNFNGRFYYLIHPTKLTYDEAVQACLNDGAQIAKVGQIFAAWKLLGYDRCDAGWLADGSVRYPISRPRRRCRPNEAAVRFVGFPDKKHKLYGVYCFRAYN.

The propeptide occupies 1–9; the sequence is MKSLLLLVL. Asn21 and Asn56 each carry an N-linked (GlcNAc...) asparagine glycan. Positions 38–152 constitute an Ig-like V-type domain; the sequence is PRLLVEAEQA…EGLEDDTAVV (115 aa). 5 disulfide bridges follow: Cys61–Cys139, Cys181–Cys252, Cys205–Cys226, Cys279–Cys349, and Cys304–Cys325. 2 consecutive Link domains span residues 159-254 and 259-351; these read VVFP…FCFT and GRFY…YCFR.

The protein belongs to the HAPLN family.

It is found in the secreted. Its subcellular location is the extracellular space. The protein resides in the extracellular matrix. Its function is as follows. Stabilizes the aggregates of proteoglycan monomers with hyaluronic acid in the extracellular cartilage matrix. The chain is Hyaluronan and proteoglycan link protein 1 (HAPLN1) from Sus scrofa (Pig).